Here is a 193-residue protein sequence, read N- to C-terminus: Guanylate kinase (193 aa).

A Guanylate kinase-like domain is found at 12–191 (DLLTIVAGPT…AANELWLAMN (180 aa)). 19-26 (GPTAVGKG) is a binding site for ATP.

It belongs to the guanylate kinase family.

It is found in the cytoplasm. It catalyses the reaction GMP + ATP = GDP + ADP. Its function is as follows. Essential for recycling GMP and indirectly, cGMP. This is Guanylate kinase from Tropheryma whipplei (strain TW08/27) (Whipple's bacillus).